Here is a 284-residue protein sequence, read N- to C-terminus: MNNMDYDPRSMGSYGPNYNNFNPNFGKIRRHKNTSYPGYNGFDPSDGPMNGPMGGPMGGPMNGPMNGQMGGPMNGSMNGPMNGPMNGPMNGQMGGPMNGPMGGPINGPMNGPRGRQMNGPNNGPMGGPMNGPMNGPNNNQFNGPMNGPNEYYSPEDSDGSDYSDSNPNEFDSDDDDIDLSYFQKRQYDKPTYHKFEVTDEYLADYLLRKFGLDKDKVVRSIQKNKKDEFKAMILNYFYKENPKIKHQSINNQYKLFRKWNKSGLKIKIDDLETYYENKVKPHMH.

2 stretches are compositionally biased toward low complexity: residues 110 to 123 and 130 to 149; these read NGPR…PNNG and NGPM…NGPN. The segment at 110–176 is disordered; the sequence is NGPRGRQMNG…PNEFDSDDDD (67 aa).

It localises to the virion. This is an uncharacterized protein from Acanthamoeba polyphaga mimivirus (APMV).